Consider the following 457-residue polypeptide: Protein N-terminal amidase (457 aa).

The 435-residue stretch at 19 to 453 folds into the CN hydrolase domain; that stretch reads LKVLVIQLNP…EGAILREVQF (435 aa). Residue glutamate 63 is the Proton acceptor of the active site. Residue lysine 136 is the Proton donor of the active site. Cysteine 187 serves as the catalytic Nucleophile.

It belongs to the carbon-nitrogen hydrolase superfamily.

In terms of biological role, deamidates N-terminal Asn and Gln. Component of a targeting complex in the N-end rule pathway. The polypeptide is Protein N-terminal amidase (NTA1) (Saccharomyces cerevisiae (strain ATCC 204508 / S288c) (Baker's yeast)).